A 133-amino-acid chain; its full sequence is NADH dehydrogenase [ubiquinone] 1 alpha subcomplex subunit 6 (133 aa).

Belongs to the complex I LYR family. As to quaternary structure, complex I is composed of at least 49 different subunits.

It is found in the mitochondrion inner membrane. In terms of biological role, accessory subunit of the mitochondrial membrane respiratory chain NADH dehydrogenase (Complex I), that is believed to be not involved in catalysis. Complex I functions in the transfer of electrons from NADH to the respiratory chain. The immediate electron acceptor for the enzyme is believed to be ubiquinone. The chain is NADH dehydrogenase [ubiquinone] 1 alpha subcomplex subunit 6 from Arabidopsis thaliana (Mouse-ear cress).